We begin with the raw amino-acid sequence, 297 residues long: HTH-type transcriptional regulator ArgP (297 aa).

Residues 4-60 (PDYRTLQALDAVIRERGFERAAQKLCITQSAVSQRIKQLENMFGQPLLVRTVPPRPT) enclose the HTH lysR-type domain. Residues 21 to 40 (FERAAQKLCITQSAVSQRIK) constitute a DNA-binding region (H-T-H motif).

The protein belongs to the LysR transcriptional regulatory family. As to quaternary structure, homodimer.

In terms of biological role, controls the transcription of genes involved in arginine and lysine metabolism. This chain is HTH-type transcriptional regulator ArgP, found in Salmonella arizonae (strain ATCC BAA-731 / CDC346-86 / RSK2980).